A 484-amino-acid chain; its full sequence is 60S ribosome subunit biogenesis protein NOP8 (484 aa).

The RRM domain occupies 7-83 (KRIFVGNIFH…NILKVDEAKP (77 aa)). Residues S234, S239, and S268 each carry the phosphoserine modification. The disordered stretch occupies residues 260–330 (DKPMTLNDSD…EGDGQEDNEF (71 aa)). Acidic residues predominate over residues 320-329 (DEGDGQEDNE). At S370 the chain carries Phosphoserine.

As to quaternary structure, interacts with NIP7 and RRP43. Together with DBP6, URB1, URB2 and RSA3, forms an RNA-independent complex, which is required during early maturation of nascent 60S ribosomal subunits.

The protein localises to the nucleus. Its subcellular location is the nucleolus. Functionally, required for 60S ribosomal subunit synthesis. May be involved in assembly reactions occurring within late pre-ribosomal particles. This is 60S ribosome subunit biogenesis protein NOP8 (NOP8) from Saccharomyces cerevisiae (strain ATCC 204508 / S288c) (Baker's yeast).